A 408-amino-acid chain; its full sequence is Histidine--tRNA ligase (408 aa).

It belongs to the class-II aminoacyl-tRNA synthetase family. As to quaternary structure, homodimer.

It is found in the cytoplasm. The catalysed reaction is tRNA(His) + L-histidine + ATP = L-histidyl-tRNA(His) + AMP + diphosphate + H(+). This is Histidine--tRNA ligase from Wolbachia pipientis wMel.